Here is a 151-residue protein sequence, read N- to C-terminus: 3-dehydroquinate dehydratase (151 aa).

Tyr26 (proton acceptor) is an active-site residue. Positions 77, 83, and 90 each coordinate substrate. His103 acts as the Proton donor in catalysis. Substrate-binding positions include 104 to 105 (LS) and Arg114.

Belongs to the type-II 3-dehydroquinase family. In terms of assembly, homododecamer.

The catalysed reaction is 3-dehydroquinate = 3-dehydroshikimate + H2O. The protein operates within metabolic intermediate biosynthesis; chorismate biosynthesis; chorismate from D-erythrose 4-phosphate and phosphoenolpyruvate: step 3/7. In terms of biological role, catalyzes a trans-dehydration via an enolate intermediate. This chain is 3-dehydroquinate dehydratase, found in Pelodictyon phaeoclathratiforme (strain DSM 5477 / BU-1).